Here is a 122-residue protein sequence, read N- to C-terminus: Large ribosomal subunit protein uL14 (122 aa).

The protein belongs to the universal ribosomal protein uL14 family. In terms of assembly, part of the 50S ribosomal subunit. Forms a cluster with proteins L3 and L19. In the 70S ribosome, L14 and L19 interact and together make contacts with the 16S rRNA in bridges B5 and B8.

Its function is as follows. Binds to 23S rRNA. Forms part of two intersubunit bridges in the 70S ribosome. This Chlorobium phaeovibrioides (strain DSM 265 / 1930) (Prosthecochloris vibrioformis (strain DSM 265)) protein is Large ribosomal subunit protein uL14.